The chain runs to 105 residues: Small ribosomal subunit protein eS24 (105 aa).

Positions 86 to 105 are disordered; that stretch reads LERNKIEADEEADEEAAEEA. Positions 93–105 are enriched in acidic residues; it reads ADEEADEEAAEEA.

This sequence belongs to the eukaryotic ribosomal protein eS24 family.

In Natronomonas pharaonis (strain ATCC 35678 / DSM 2160 / CIP 103997 / JCM 8858 / NBRC 14720 / NCIMB 2260 / Gabara) (Halobacterium pharaonis), this protein is Small ribosomal subunit protein eS24.